The chain runs to 457 residues: Bifunctional protein GlmU (457 aa).

Residues 1–228 (MEGLVTLILA…SEEITGVNSR (228 aa)) are pyrophosphorylase. UDP-N-acetyl-alpha-D-glucosamine is bound by residues 9–12 (LAAG), Lys23, Gln73, and 78–79 (GT). Asp102 provides a ligand contact to Mg(2+). Residues Gly139, Glu154, Asn169, and Asn226 each coordinate UDP-N-acetyl-alpha-D-glucosamine. Residue Asn226 coordinates Mg(2+). The segment at 229 to 249 (VQLFEAEKIMRKRINYRHMEN) is linker. The interval 250–457 (GVTIVDPDTT…VQERIKKGRL (208 aa)) is N-acetyltransferase. Positions 331 and 349 each coordinate UDP-N-acetyl-alpha-D-glucosamine. Catalysis depends on His361, which acts as the Proton acceptor. Residues Tyr364 and Asn375 each contribute to the UDP-N-acetyl-alpha-D-glucosamine site. Acetyl-CoA-binding positions include 384 to 385 (NY), Ala421, and Arg438.

In the N-terminal section; belongs to the N-acetylglucosamine-1-phosphate uridyltransferase family. This sequence in the C-terminal section; belongs to the transferase hexapeptide repeat family. Homotrimer. It depends on Mg(2+) as a cofactor.

It is found in the cytoplasm. The enzyme catalyses alpha-D-glucosamine 1-phosphate + acetyl-CoA = N-acetyl-alpha-D-glucosamine 1-phosphate + CoA + H(+). It catalyses the reaction N-acetyl-alpha-D-glucosamine 1-phosphate + UTP + H(+) = UDP-N-acetyl-alpha-D-glucosamine + diphosphate. The protein operates within nucleotide-sugar biosynthesis; UDP-N-acetyl-alpha-D-glucosamine biosynthesis; N-acetyl-alpha-D-glucosamine 1-phosphate from alpha-D-glucosamine 6-phosphate (route II): step 2/2. Its pathway is nucleotide-sugar biosynthesis; UDP-N-acetyl-alpha-D-glucosamine biosynthesis; UDP-N-acetyl-alpha-D-glucosamine from N-acetyl-alpha-D-glucosamine 1-phosphate: step 1/1. It functions in the pathway bacterial outer membrane biogenesis; LPS lipid A biosynthesis. Functionally, catalyzes the last two sequential reactions in the de novo biosynthetic pathway for UDP-N-acetylglucosamine (UDP-GlcNAc). The C-terminal domain catalyzes the transfer of acetyl group from acetyl coenzyme A to glucosamine-1-phosphate (GlcN-1-P) to produce N-acetylglucosamine-1-phosphate (GlcNAc-1-P), which is converted into UDP-GlcNAc by the transfer of uridine 5-monophosphate (from uridine 5-triphosphate), a reaction catalyzed by the N-terminal domain. In Thermoanaerobacter pseudethanolicus (strain ATCC 33223 / 39E) (Clostridium thermohydrosulfuricum), this protein is Bifunctional protein GlmU.